A 109-amino-acid chain; its full sequence is Putative double-stranded DNA mimic protein YciU (109 aa).

Belongs to the putative dsDNA mimic protein family.

Its function is as follows. May act as a double-stranded DNA (dsDNA) mimic. Probably regulates the activity of a dsDNA-binding protein. In Salmonella choleraesuis (strain SC-B67), this protein is Putative double-stranded DNA mimic protein YciU.